The chain runs to 33 residues: U13-ctenitoxin-Pn1c (33 aa).

3 disulfides stabilise this stretch: cysteine 3-cysteine 17, cysteine 10-cysteine 21, and cysteine 16-cysteine 30.

As to expression, expressed by the venom gland.

The protein resides in the secreted. Its function is as follows. Acts as a neurotoxin. The protein is U13-ctenitoxin-Pn1c of Phoneutria nigriventer (Brazilian armed spider).